The following is a 379-amino-acid chain: Glutamate 5-kinase (379 aa).

Lys-19 contacts ATP. Positions 59, 146, and 158 each coordinate substrate. 178-179 contributes to the ATP binding site; the sequence is TD. The PUA domain occupies 285–363; the sequence is RGAVTVDAGA…SEFERLLGYV (79 aa).

Belongs to the glutamate 5-kinase family.

Its subcellular location is the cytoplasm. The catalysed reaction is L-glutamate + ATP = L-glutamyl 5-phosphate + ADP. It participates in amino-acid biosynthesis; L-proline biosynthesis; L-glutamate 5-semialdehyde from L-glutamate: step 1/2. Functionally, catalyzes the transfer of a phosphate group to glutamate to form L-glutamate 5-phosphate. The chain is Glutamate 5-kinase from Variovorax paradoxus (strain S110).